The following is a 226-amino-acid chain: Cytidylate kinase (226 aa).

10–18 (GPASSGKST) provides a ligand contact to ATP.

This sequence belongs to the cytidylate kinase family. Type 1 subfamily.

The protein localises to the cytoplasm. It catalyses the reaction CMP + ATP = CDP + ADP. The enzyme catalyses dCMP + ATP = dCDP + ADP. This chain is Cytidylate kinase, found in Enterococcus faecalis (strain ATCC 700802 / V583).